Here is a 5900-residue protein sequence, read N- to C-terminus: Midasin (5900 aa).

The disordered stretch occupies residues 250 to 270 (GSSVKSKKGGEQQQEGEGEDE). AAA-ATPase protomer stretches follow at residues 278–583 (TNTV…LRKQ), 673–1012 (EKIS…ALNY), 1101–1346 (PIIP…IAGY), 1411–1721 (IVWT…MDKQ), 1840–2089 (RGMQ…HVLT), and 2167–2451 (LENI…EIYM). ATP is bound by residues 302 to 309 (GVTGSGKT) and 689 to 696 (GETGTGKT). Residues 796 to 826 (QTTTNNTKENNNNNNNNNNNNNNNNNNKKRT) are disordered. Over residues 797-821 (TTTNNTKENNNNNNNNNNNNNNNNN) the composition is skewed to low complexity. Residues 1135 to 1142 (GPTSSGKT), 1438 to 1445 (GETGCSKT), 1852 to 1859 (GSPGVGKT), and 2184 to 2191 (GPTSTSKT) each bind ATP. Positions 2562–4965 (ESAIKSILCE…EGKGKKDVSD (2404 aa)) are linker. Residues 4932 to 5598 (GDDGEGGEGG…SVEEKKLTRE (667 aa)) are disordered. A compositionally biased stretch (acidic residues) spans 4984-5008 (KDEDEDEEKEEKDEDEGFDMQDDFE). A compositionally biased stretch (basic and acidic residues) spans 5009–5055 (GEMHDIKKDENKDEDKKDDPNNEKENDKEMGDLEKPEDNVVDEKLWD). The span at 5056–5076 (EQDVQDEEEQDEEGKGDETNS) shows a compositional bias: acidic residues. The segment covering 5079 to 5113 (MMAKQDGKDDNDDDKKDDDKKDDKKKKKEENGKPD) has biased composition (basic and acidic residues). 2 stretches are compositionally biased toward acidic residues: residues 5114–5130 (ENEEGEEGKDDEEEDGK) and 5139–5156 (GASDEDDFGQEENEDDVI). Residues 5159-5173 (EQEKEENHGDPRGDD) show a composition bias toward basic and acidic residues. Residues 5174–5199 (QMEIPEDLELEDPDEGKEDDEQQDGG) are compositionally biased toward acidic residues. Residues 5213 to 5224 (DVSKEEEKKKEL) show a composition bias toward basic and acidic residues. Acidic residues-rich tracts occupy residues 5225–5255 (DGDEKEESDQDGDEEKEDEEKEDGDEDEDKE) and 5273–5286 (EGDEPEKEQPEEDQ). Positions 5297–5313 (ETPKDSEQPLGVKDKTG) are enriched in basic and acidic residues. A compositionally biased stretch (polar residues) spans 5339 to 5349 (GMTQPTPSEND). Positions 5410–5442 (SEPKEKAPKQDPNAKENENQDYEFIKDDEKLDK) are enriched in basic and acidic residues. Over residues 5448–5460 (QALAAATDTQLQD) the composition is skewed to low complexity. The segment covering 5469-5487 (DQAEQEEDQMDIDEEDDMD) has biased composition (acidic residues). 2 stretches are compositionally biased toward basic and acidic residues: residues 5488–5536 (VDHK…KDQQ) and 5551–5570 (QFTKEQLENLTNLDKEKAVL). Residues 5571–5590 (DDGDDQEMEQDGDQDDEESV) show a composition bias toward acidic residues. The VWFA domain maps to 5696-5889 (QVLLAIDDTE…NIPSILSDTL (194 aa)).

The protein belongs to the midasin family. In terms of assembly, associates with pre-60S ribosomes in the nucleoplasm.

Its subcellular location is the nucleus. The protein localises to the nucleolus. It localises to the nucleoplasm. Functionally, nuclear chaperone required for maturation and nuclear export of pre-60S ribosome subunits. Functions at successive maturation steps to remove ribosomal factors at critical transition points, first driving the exit of early pre-60S particles from the nucleolus and then driving late pre-60S particles from the nucleus. The chain is Midasin (mdn1) from Dictyostelium discoideum (Social amoeba).